The primary structure comprises 397 residues: Enoyl-[acyl-carrier-protein] reductase [NADH] (397 aa).

NAD(+) is bound by residues 47-52 (GASTGY), 73-74 (LE), 110-111 (DA), and 138-139 (LA). Y224 serves as a coordination point for substrate. The active-site Proton donor is the Y234. NAD(+) contacts are provided by residues K243 and 272–274 (LVT).

This sequence belongs to the TER reductase family. In terms of assembly, monomer.

The enzyme catalyses a 2,3-saturated acyl-[ACP] + NAD(+) = a (2E)-enoyl-[ACP] + NADH + H(+). The protein operates within lipid metabolism; fatty acid biosynthesis. Functionally, involved in the final reduction of the elongation cycle of fatty acid synthesis (FAS II). Catalyzes the reduction of a carbon-carbon double bond in an enoyl moiety that is covalently linked to an acyl carrier protein (ACP). The protein is Enoyl-[acyl-carrier-protein] reductase [NADH] of Methylobacillus flagellatus (strain ATCC 51484 / DSM 6875 / VKM B-1610 / KT).